The sequence spans 249 residues: 2,3-bisphosphoglycerate-dependent phosphoglycerate mutase (249 aa).

Substrate-binding positions include 11–18, 24–25, Arg63, 90–93, Lys101, and 117–118; these read RHGESEWN, TG, ERHY, and RR. The active-site Tele-phosphohistidine intermediate is His12. Catalysis depends on Glu90, which acts as the Proton donor/acceptor. Residues 119 to 138 form a disordered region; sequence SYDTPPPPIERGSTYSQDAD. Residue 184–185 coordinates substrate; the sequence is GN.

It belongs to the phosphoglycerate mutase family. BPG-dependent PGAM subfamily.

The enzyme catalyses (2R)-2-phosphoglycerate = (2R)-3-phosphoglycerate. It functions in the pathway carbohydrate degradation; glycolysis; pyruvate from D-glyceraldehyde 3-phosphate: step 3/5. Functionally, catalyzes the interconversion of 2-phosphoglycerate and 3-phosphoglycerate. The polypeptide is 2,3-bisphosphoglycerate-dependent phosphoglycerate mutase (Mycolicibacterium paratuberculosis (strain ATCC BAA-968 / K-10) (Mycobacterium paratuberculosis)).